Consider the following 352-residue polypeptide: Ion-translocating oxidoreductase complex subunit D (352 aa).

Transmembrane regions (helical) follow at residues 20–40 (IMLLVLLAAVPGIAAQLWFFG), 42–62 (GTLVQILLASVSTLLAEALVL), 89–109 (IPPLAPWWMVVLGTVFAVIIA), and 123–143 (PAMIGYVVLLISFPVQMTSWL). At Thr187 the chain carries FMN phosphoryl threonine. 5 consecutive transmembrane segments (helical) span residues 214–234 (ILAGAGWQWVNLAWLAGGLWL), 242–262 (WHIPLSFLVTLALCATLGWLF), 267–287 (LAAPQIHLLSGATMLGAFFIL), 301–321 (LIFGALAGLLVWLIRSFGGYP), and 322–342 (DGVAFAVLLANITVPLIDYYT).

Belongs to the NqrB/RnfD family. The complex is composed of six subunits: RsxA, RsxB, RsxC, RsxD, RsxE and RsxG. Requires FMN as cofactor.

Its subcellular location is the cell inner membrane. Its function is as follows. Part of a membrane-bound complex that couples electron transfer with translocation of ions across the membrane. Required to maintain the reduced state of SoxR. The polypeptide is Ion-translocating oxidoreductase complex subunit D (Shigella sonnei (strain Ss046)).